Here is a 328-residue protein sequence, read N- to C-terminus: Transcription initiation factor TFIID subunit 8 (328 aa).

Positions 16–83 (RRILNKVVSQ…DVSLALINMG (68 aa)) constitute a Histone-fold domain. Residues 229–309 (NRTEDEPSKD…PGTMPSRSLA (81 aa)) form a disordered region. Ser-236, Ser-245, and Ser-255 each carry phosphoserine. Acidic residues predominate over residues 239-251 (DGEEGDSENEEMD). A compositionally biased stretch (basic and acidic residues) spans 252–264 (GDKSKEEKPELDI). Residues 296–309 (NCPTPGTMPSRSLA) show a composition bias toward polar residues.

This sequence belongs to the TAF8 family. Belongs to the TFIID complex which is composed of TATA binding protein (Tbp) and a number of TBP-associated factors (TAFs). Histone fold interacts with N-terminus of Taf10b.

It localises to the nucleus. TFIID is a multimeric protein complex that plays a central role in mediating promoter responses to various activators and repressors. The sequence is that of Transcription initiation factor TFIID subunit 8 from Drosophila melanogaster (Fruit fly).